The primary structure comprises 899 residues: MPQMDPELFDRGQFQAELALKSSPIAAFKKAIRHAREVLDARFKGGRDIRRLVEDRAWFVDQILQEAWKRFAWSEDADIALLAVGGYGRGELHPYSDIDLLILLDSSDHEIFREPIEGFLTLLWDIGLEVGQSVRSVDECAEEARADLTVITNLMESRTIAGPEHLRQRMQQVTSSEQMWPSKHFYLAKREERKARHAKYNDTEYNLEPNVKGSPGGLRDIQTVLWVARRQFGTLNLQALVGQGFLLESEYALLSSSQEFLWKVRYALHMLAGRAEDRLLFDYQARIAALFGYQDGDGKRSIEHFMQKYYRVVMGISELSDLINQHFEEVILRAGESGPATPLNSRFQVRDGYIEVTHPNVFKRTPFAILEVFVLMAQNPEIKGVRADSIRLLRDSRHLIDDDFRKDIRNTSLFIELFKCKEGIHRNLRRMNRYGILGRYLPEFGHIVGQMQHDLFHIYTVDAHTLNLIKHLRKFRWPELAEKFPLASKLIDRLPKPELIYLAGLYHDIGKGRGGDHSELGAVDAEAFARRHQLPAWDSALIVWLVQHHLVMSTTAQRKDLSDPQVIHDFAQFVGDQTHLDYLYVLTVADINATNPSLWNSWRASLLRQLYTETKRALRRGLENPLDREEQIRQTQSAALDILVRGGTDPDDAEQLWSQLGDDYFLRHTANDVAWHTEAILQHPADSGPLVLIKETTQREFEGGTQIFIYAPDQHDFFAVTVAAMSQLNLNIHDARIITSTSQFTLDTYVVLDADGGSIGDNPARIKQIREGLIEALKNPDEYPTIIQRRVPRQLKHFAFAPQVTIHNDAQRPVTILELTAPDRPGLLARIGRIFLEYDLSLQNAKIATLGERVEDVFFVTDANNQPLSDPELCARLQETIVRRLSEPSAQPQSLQIDI.

The tract at residues 1–342 (MPQMDPELFD…RAGESGPATP (342 aa)) is uridylyltransferase. The uridylyl-removing stretch occupies residues 343 to 705 (LNSRFQVRDG…TTQREFEGGT (363 aa)). Residues 461-583 (VDAHTLNLIK…VGDQTHLDYL (123 aa)) form the HD domain. ACT domains follow at residues 706–784 (QIFI…DEYP) and 816–897 (ILEL…SLQI).

The protein belongs to the GlnD family. The cofactor is Mg(2+).

It catalyses the reaction [protein-PII]-L-tyrosine + UTP = [protein-PII]-uridylyl-L-tyrosine + diphosphate. The catalysed reaction is [protein-PII]-uridylyl-L-tyrosine + H2O = [protein-PII]-L-tyrosine + UMP + H(+). Its activity is regulated as follows. Uridylyltransferase (UTase) activity is inhibited by glutamine, while glutamine activates uridylyl-removing (UR) activity. Functionally, modifies, by uridylylation and deuridylylation, the PII regulatory proteins (GlnB and homologs), in response to the nitrogen status of the cell that GlnD senses through the glutamine level. Under low glutamine levels, catalyzes the conversion of the PII proteins and UTP to PII-UMP and PPi, while under higher glutamine levels, GlnD hydrolyzes PII-UMP to PII and UMP (deuridylylation). Thus, controls uridylylation state and activity of the PII proteins, and plays an important role in the regulation of nitrogen assimilation and metabolism. This is Bifunctional uridylyltransferase/uridylyl-removing enzyme from Ectopseudomonas mendocina (strain ymp) (Pseudomonas mendocina).